A 241-amino-acid chain; its full sequence is Small ribosomal subunit protein uS2 (241 aa).

Belongs to the universal ribosomal protein uS2 family.

The chain is Small ribosomal subunit protein uS2 from Salmonella choleraesuis (strain SC-B67).